Here is a 29-residue protein sequence, read N- to C-terminus: Cytochrome b6-f complex subunit 8 (29 aa).

Residues 3–23 (IVSLGWAFLMVVFSFSLSLVV) form a helical membrane-spanning segment.

Belongs to the PetN family. In terms of assembly, the 4 large subunits of the cytochrome b6-f complex are cytochrome b6, subunit IV (17 kDa polypeptide, PetD), cytochrome f and the Rieske protein, while the 4 small subunits are PetG, PetL, PetM and PetN. The complex functions as a dimer.

It localises to the plastid. The protein localises to the chloroplast thylakoid membrane. In terms of biological role, component of the cytochrome b6-f complex, which mediates electron transfer between photosystem II (PSII) and photosystem I (PSI), cyclic electron flow around PSI, and state transitions. The protein is Cytochrome b6-f complex subunit 8 of Chlorokybus atmophyticus (Soil alga).